The primary structure comprises 598 residues: Glutamine--fructose-6-phosphate aminotransferase [isomerizing] (598 aa).

Residue C2 is the Nucleophile; for GATase activity of the active site. In terms of domain architecture, Glutamine amidotransferase type-2 spans 2–218; it reads CGIVGYIGNN…DLSLGYASKD (217 aa). SIS domains follow at residues 277–421 and 450–588; these read VFDE…KRNL and LSKR…VDMP. Catalysis depends on K593, which acts as the For Fru-6P isomerization activity.

In terms of assembly, homodimer.

It is found in the cytoplasm. It catalyses the reaction D-fructose 6-phosphate + L-glutamine = D-glucosamine 6-phosphate + L-glutamate. Functionally, catalyzes the first step in hexosamine metabolism, converting fructose-6P into glucosamine-6P using glutamine as a nitrogen source. The sequence is that of Glutamine--fructose-6-phosphate aminotransferase [isomerizing] from Campylobacter jejuni subsp. jejuni serotype O:2 (strain ATCC 700819 / NCTC 11168).